The chain runs to 142 residues: Putative pre-16S rRNA nuclease (142 aa).

It belongs to the YqgF nuclease family.

It is found in the cytoplasm. In terms of biological role, could be a nuclease involved in processing of the 5'-end of pre-16S rRNA. The chain is Putative pre-16S rRNA nuclease from Lactobacillus acidophilus (strain ATCC 700396 / NCK56 / N2 / NCFM).